The following is a 488-amino-acid chain: UDP-GalNAc:beta-1,3-N-acetylgalactosaminyltransferase 2 (488 aa).

Over 1 to 2 (MR) the chain is Cytoplasmic. Residues 3–23 (HLLLLFLCPCAIGVAFHLWLF) traverse the membrane as a helical; Signal-anchor for type II membrane protein segment. Asn24, Asn105, and Asn162 each carry an N-linked (GlcNAc...) asparagine glycan. Over 24–488 (NFSGLFTWFP…CGNPCACEDR (465 aa)) the chain is Lumenal.

It belongs to the glycosyltransferase 31 family.

Its subcellular location is the golgi apparatus membrane. It is found in the endoplasmic reticulum. It carries out the reaction 3-O-(N-acetyl-beta-D-glucosaminyl-(1-&gt;4)-alpha-D-mannosyl)-L-threonyl-[protein] + UDP-N-acetyl-alpha-D-galactosamine = 3-O-[beta-D-GalNAc-(1-&gt;3)-beta-D-GlcNAc-(1-&gt;4)-alpha-D-Man]-L-Thr-[protein] + UDP + H(+). The protein operates within protein modification; protein glycosylation. In terms of biological role, beta-1,3-N-acetylgalactosaminyltransferase that synthesizes a unique carbohydrate structure, GalNAc-beta-1-3GlcNAc, on N- and O-glycans. Has no galactose nor galactosaminyl transferase activity toward any acceptor substrate. Involved in alpha-dystroglycan (dag1) glycosylation. In Xenopus tropicalis (Western clawed frog), this protein is UDP-GalNAc:beta-1,3-N-acetylgalactosaminyltransferase 2 (b3galnt2).